The following is a 167-amino-acid chain: Acetolactate synthase small subunit (167 aa).

The region spanning 7-81 is the ACT domain; it reads TLSVLVEAKP…NVIKIVELED (75 aa).

Belongs to the acetolactate synthase small subunit family. In terms of assembly, dimer of large and small chains.

It catalyses the reaction 2 pyruvate + H(+) = (2S)-2-acetolactate + CO2. The protein operates within amino-acid biosynthesis; L-isoleucine biosynthesis; L-isoleucine from 2-oxobutanoate: step 1/4. It functions in the pathway amino-acid biosynthesis; L-valine biosynthesis; L-valine from pyruvate: step 1/4. This is Acetolactate synthase small subunit (ilvH) from Mycobacterium avium.